The following is a 273-amino-acid chain: Undecaprenyl-diphosphatase (273 aa).

The next 7 membrane-spanning stretches (helical) occupy residues 6 to 26 (SLLIAAILGVVEGLTEFLPVS), 45 to 65 (AKTFEVVIQLGSILAVVVMFW), 90 to 110 (LTLIHILLGMIPAVVLGLVFH), 116 to 136 (LFNPINVMYTLVVGGLLLIAA), 190 to 210 (YAASEFSFLLAVPMMMGATVL), 222 to 242 (ADIPMFAVGFVTAFVVALIAI), and 252 to 272 (ISFIPFAIYRFVVAAAVYVVF).

Belongs to the UppP family.

It is found in the cell inner membrane. The catalysed reaction is di-trans,octa-cis-undecaprenyl diphosphate + H2O = di-trans,octa-cis-undecaprenyl phosphate + phosphate + H(+). Functionally, catalyzes the dephosphorylation of undecaprenyl diphosphate (UPP). Confers resistance to bacitracin. This chain is Undecaprenyl-diphosphatase, found in Salmonella paratyphi C (strain RKS4594).